A 125-amino-acid chain; its full sequence is MQTWLFVAAGGAIGACLRFGISELMALLLGRHFPYGTLVVNVVGSFIMGIAFALISHGHVVEHPMKPLLMVGILGALTTFSSFALDTVVLAQQGAYLKAVLNMGLNLSLCLAMVLLGMQLVASRV.

A run of 4 helical transmembrane segments spans residues 4–24 (WLFV…ISEL), 35–55 (YGTL…FALI), 69–89 (LMVG…DTVV), and 103–123 (MGLN…LVAS). Residues glycine 75 and threonine 78 each contribute to the Na(+) site.

It belongs to the fluoride channel Fluc/FEX (TC 1.A.43) family.

It is found in the cell inner membrane. It catalyses the reaction fluoride(in) = fluoride(out). With respect to regulation, na(+) is not transported, but it plays an essential structural role and its presence is essential for fluoride channel function. In terms of biological role, fluoride-specific ion channel. Important for reducing fluoride concentration in the cell, thus reducing its toxicity. The chain is Fluoride-specific ion channel FluC from Aeromonas salmonicida (strain A449).